The following is a 387-amino-acid chain: Beta-citrylglutamate synthase B (387 aa).

Residues 119-304 (FQELAGHGVP…VAGIIADYAA (186 aa)) form the ATP-grasp domain. Residues lysine 158, 193–203 (QKYIKESHGRD), and arginine 219 contribute to the ATP site. 3 residues coordinate Mg(2+): aspartate 264, glutamate 277, and asparagine 279. Mn(2+) contacts are provided by aspartate 264, glutamate 277, and asparagine 279. The disordered stretch occupies residues 325–361 (ASETSEPELGPPASAAVDNMSASSSSVDSDPESTTER). Low complexity predominate over residues 337–352 (ASAAVDNMSASSSSVD).

It belongs to the RimK family. The cofactor is Mg(2+). It depends on Mn(2+) as a cofactor. In terms of tissue distribution, strongly expressed in brain and testis. Expressed in eyes, thymus, lung, kidney, skeletal muscle, spleen, skin and heart. Expressed in neurons of the neocortex, the gray matter and Purkinje cells.

The protein resides in the cytoplasm. The enzyme catalyses citrate + L-glutamate + ATP = beta-citrylglutamate + ADP + phosphate + H(+). It catalyses the reaction N-acetyl-L-aspartate + L-glutamate + ATP = N-acetyl-L-aspartyl-L-glutamate + ADP + phosphate + H(+). Catalyzes the synthesis of beta-citryl-L-glutamate and N-acetyl-L-aspartyl-L-glutamate. Beta-citryl-L-glutamate is synthesized more efficiently than N-acetyl-L-aspartyl-L-glutamate. In Mus musculus (Mouse), this protein is Beta-citrylglutamate synthase B (Rimklb).